A 235-amino-acid polypeptide reads, in one-letter code: Putative N-acetylmannosamine-6-phosphate 2-epimerase (235 aa).

It belongs to the NanE family.

It catalyses the reaction an N-acyl-D-glucosamine 6-phosphate = an N-acyl-D-mannosamine 6-phosphate. The protein operates within amino-sugar metabolism; N-acetylneuraminate degradation; D-fructose 6-phosphate from N-acetylneuraminate: step 3/5. Functionally, converts N-acetylmannosamine-6-phosphate (ManNAc-6-P) to N-acetylglucosamine-6-phosphate (GlcNAc-6-P). The protein is Putative N-acetylmannosamine-6-phosphate 2-epimerase of Aliivibrio fischeri (strain ATCC 700601 / ES114) (Vibrio fischeri).